The following is a 454-amino-acid chain: Bifunctional protein GlmU (454 aa).

The tract at residues 1–226 is pyrophosphorylase; the sequence is MALNVVILAA…AVEVEGANNR (226 aa). UDP-N-acetyl-alpha-D-glucosamine-binding positions include 8 to 11, Lys-22, Gln-73, 78 to 79, 100 to 102, Gly-137, Glu-151, Asn-166, and Asn-224; these read LAAG, GT, and YGD. Asp-102 lines the Mg(2+) pocket. Asn-224 lines the Mg(2+) pocket. A linker region spans residues 227-247; sequence VQLAQLERAYQARAAEKLMLE. Positions 248-454 are N-acetyltransferase; the sequence is GANLRDPARI…GWARPVKKAK (207 aa). UDP-N-acetyl-alpha-D-glucosamine contacts are provided by Arg-330 and Lys-348. Catalysis depends on His-360, which acts as the Proton acceptor. UDP-N-acetyl-alpha-D-glucosamine is bound by residues Tyr-363 and Asn-374. Residues Ala-377, 383-384, Ser-402, Ala-420, and Arg-437 contribute to the acetyl-CoA site; that span reads NY.

This sequence in the N-terminal section; belongs to the N-acetylglucosamine-1-phosphate uridyltransferase family. In the C-terminal section; belongs to the transferase hexapeptide repeat family. As to quaternary structure, homotrimer. It depends on Mg(2+) as a cofactor.

The protein localises to the cytoplasm. The catalysed reaction is alpha-D-glucosamine 1-phosphate + acetyl-CoA = N-acetyl-alpha-D-glucosamine 1-phosphate + CoA + H(+). It carries out the reaction N-acetyl-alpha-D-glucosamine 1-phosphate + UTP + H(+) = UDP-N-acetyl-alpha-D-glucosamine + diphosphate. It functions in the pathway nucleotide-sugar biosynthesis; UDP-N-acetyl-alpha-D-glucosamine biosynthesis; N-acetyl-alpha-D-glucosamine 1-phosphate from alpha-D-glucosamine 6-phosphate (route II): step 2/2. The protein operates within nucleotide-sugar biosynthesis; UDP-N-acetyl-alpha-D-glucosamine biosynthesis; UDP-N-acetyl-alpha-D-glucosamine from N-acetyl-alpha-D-glucosamine 1-phosphate: step 1/1. It participates in bacterial outer membrane biogenesis; LPS lipid A biosynthesis. Catalyzes the last two sequential reactions in the de novo biosynthetic pathway for UDP-N-acetylglucosamine (UDP-GlcNAc). The C-terminal domain catalyzes the transfer of acetyl group from acetyl coenzyme A to glucosamine-1-phosphate (GlcN-1-P) to produce N-acetylglucosamine-1-phosphate (GlcNAc-1-P), which is converted into UDP-GlcNAc by the transfer of uridine 5-monophosphate (from uridine 5-triphosphate), a reaction catalyzed by the N-terminal domain. The polypeptide is Bifunctional protein GlmU (Shewanella piezotolerans (strain WP3 / JCM 13877)).